A 136-amino-acid chain; its full sequence is Putative covalently bound cell wall protein 22 (136 aa).

A signal peptide spans 1-18; sequence MQFSTVASIAAIAAVASA. Asn21 and Asn82 each carry an N-linked (GlcNAc...) asparagine glycan. The interval 73–110 is disordered; the sequence is PLPTTEAPKNTTSPAPTEKPTEKPTEKPTQQGSSTQTV. Residues 99–110 show a composition bias toward low complexity; it reads KPTQQGSSTQTV. The GPI-anchor amidated glycine moiety is linked to residue Gly115. A propeptide spans 116-136 (removed in mature form); it reads AAVKALPAAGALLAGAAALLL.

The protein belongs to the PGA59 family. In terms of processing, the GPI-anchor is attached to the protein in the endoplasmic reticulum and serves to target the protein to the cell surface. There, the glucosamine-inositol phospholipid moiety is cleaved off and the GPI-modified mannoprotein is covalently attached via its lipidless GPI glycan remnant to the 1,6-beta-glucan of the outer cell wall layer.

Its subcellular location is the secreted. The protein localises to the cell wall. It localises to the membrane. Its function is as follows. Cell wall protein necessary for cell wall integrity. The polypeptide is Putative covalently bound cell wall protein 22 (CCW22) (Saccharomyces cerevisiae (strain ATCC 204508 / S288c) (Baker's yeast)).